Consider the following 364-residue polypeptide: UDP-N-acetylglucosamine--N-acetylmuramyl-(pentapeptide) pyrophosphoryl-undecaprenol N-acetylglucosamine transferase (364 aa).

UDP-N-acetyl-alpha-D-glucosamine contacts are provided by residues 10–12, N124, R166, S196, and Q297; that span reads TGG.

It belongs to the glycosyltransferase 28 family. MurG subfamily.

It is found in the cell membrane. It catalyses the reaction di-trans,octa-cis-undecaprenyl diphospho-N-acetyl-alpha-D-muramoyl-L-alanyl-D-glutamyl-meso-2,6-diaminopimeloyl-D-alanyl-D-alanine + UDP-N-acetyl-alpha-D-glucosamine = di-trans,octa-cis-undecaprenyl diphospho-[N-acetyl-alpha-D-glucosaminyl-(1-&gt;4)]-N-acetyl-alpha-D-muramoyl-L-alanyl-D-glutamyl-meso-2,6-diaminopimeloyl-D-alanyl-D-alanine + UDP + H(+). The protein operates within cell wall biogenesis; peptidoglycan biosynthesis. Cell wall formation. Catalyzes the transfer of a GlcNAc subunit on undecaprenyl-pyrophosphoryl-MurNAc-pentapeptide (lipid intermediate I) to form undecaprenyl-pyrophosphoryl-MurNAc-(pentapeptide)GlcNAc (lipid intermediate II). This chain is UDP-N-acetylglucosamine--N-acetylmuramyl-(pentapeptide) pyrophosphoryl-undecaprenol N-acetylglucosamine transferase, found in Thermoanaerobacter pseudethanolicus (strain ATCC 33223 / 39E) (Clostridium thermohydrosulfuricum).